The following is a 104-amino-acid chain: L-rhamnose mutarotase (104 aa).

Y18 contributes to the substrate binding site. H22 acts as the Proton donor in catalysis. Substrate is bound by residues Y41 and 76 to 77 (WW).

The protein belongs to the rhamnose mutarotase family. As to quaternary structure, homodimer.

The protein resides in the cytoplasm. It carries out the reaction alpha-L-rhamnose = beta-L-rhamnose. The protein operates within carbohydrate metabolism; L-rhamnose metabolism. In terms of biological role, involved in the anomeric conversion of L-rhamnose. In Opitutus terrae (strain DSM 11246 / JCM 15787 / PB90-1), this protein is L-rhamnose mutarotase.